Consider the following 482-residue polypeptide: 3-isopropylmalate dehydratase large subunit (482 aa).

The disordered stretch occupies residues 60 to 79 (ATPDHNVPTTRAERQGGLES). [4Fe-4S] cluster is bound by residues C353, C414, and C417.

It belongs to the aconitase/IPM isomerase family. LeuC type 1 subfamily. As to quaternary structure, heterodimer of LeuC and LeuD. [4Fe-4S] cluster is required as a cofactor.

It carries out the reaction (2R,3S)-3-isopropylmalate = (2S)-2-isopropylmalate. It functions in the pathway amino-acid biosynthesis; L-leucine biosynthesis; L-leucine from 3-methyl-2-oxobutanoate: step 2/4. Catalyzes the isomerization between 2-isopropylmalate and 3-isopropylmalate, via the formation of 2-isopropylmaleate. The polypeptide is 3-isopropylmalate dehydratase large subunit (Xanthomonas euvesicatoria pv. vesicatoria (strain 85-10) (Xanthomonas campestris pv. vesicatoria)).